Consider the following 252-residue polypeptide: MLNQIIDRKREDILKIKLSEDLKLPKRSFKKALLSPNRFVALIAEVKKASPSKGVIQEGFEPVKIAKQYEQAKADCLSVLTDTPFFQGKNSYLSDVKRSVSLPVLRKDFIIDSIQVEEADRIGADAILLIGEALEPQKLFELYQQAVEKGMDVLVEVHGEETLEGILNVFTPEIIGVNNRNLKNFETTVGQTERMAKLVPPGTVLISESGIGKSEDLTFVKTCGAQAVLVGESLMRETSQLKAVYALFGEDG.

The protein belongs to the TrpC family.

The catalysed reaction is 1-(2-carboxyphenylamino)-1-deoxy-D-ribulose 5-phosphate + H(+) = (1S,2R)-1-C-(indol-3-yl)glycerol 3-phosphate + CO2 + H2O. It participates in amino-acid biosynthesis; L-tryptophan biosynthesis; L-tryptophan from chorismate: step 4/5. This Bacillus licheniformis (strain ATCC 14580 / DSM 13 / JCM 2505 / CCUG 7422 / NBRC 12200 / NCIMB 9375 / NCTC 10341 / NRRL NRS-1264 / Gibson 46) protein is Indole-3-glycerol phosphate synthase.